Reading from the N-terminus, the 1050-residue chain is Sucrose-phosphate synthase 4 (1050 aa).

Residues 134–167 are disordered; it reads QGRNDAEEDLLSELSEGEKDKNDGEKEKSEVVTT. Position 148 is a phosphoserine (Ser148). The span at 149–163 shows a compositional bias: basic and acidic residues; sequence EGEKDKNDGEKEKSE. Ser180 is subject to Phosphoserine.

Belongs to the glycosyltransferase 1 family. In terms of assembly, homodimer or homotetramer.

It catalyses the reaction beta-D-fructose 6-phosphate + UDP-alpha-D-glucose = sucrose 6(F)-phosphate + UDP + H(+). The protein operates within glycan biosynthesis; sucrose biosynthesis; sucrose from D-fructose 6-phosphate and UDP-alpha-D-glucose: step 1/2. Its activity is regulated as follows. Activity is regulated by phosphorylation and moderated by concentration of metabolites and light. Functionally, plays a role in photosynthetic sucrose synthesis by catalyzing the rate-limiting step of sucrose biosynthesis from UDP-glucose and fructose- 6-phosphate. Involved in the regulation of carbon partitioning in the leaves of plants. May regulate the synthesis of sucrose and therefore play a major role as a limiting factor in the export of photoassimilates out of the leaf. Plays a role for sucrose availability that is essential for plant growth and fiber elongation. The polypeptide is Sucrose-phosphate synthase 4 (Arabidopsis thaliana (Mouse-ear cress)).